The chain runs to 180 residues: uncharacterized protein (180 aa).

Residues 1–31 (MSTYEEEHGIQQNSRDYQEVGGTSQEEQRRQ) form a disordered region. Residue Ser2 is modified to N-acetylserine. An RING-type zinc finger spans residues 109 to 153 (CSICYTNYLEDEYPLVVELPHCHHKFDLECLSVWLSRSTTCPLCR).

This is an uncharacterized protein from Saccharomyces cerevisiae (strain ATCC 204508 / S288c) (Baker's yeast).